Consider the following 158-residue polypeptide: Transcription factor BTF3 homolog 4 (158 aa).

Lys-5 bears the N6-methyllysine mark. The NAC-A/B domain occupies 33 to 98 (TADDKKLQSS…AEAKPITEML (66 aa)). Thr-111 is modified (phosphothreonine). Positions 123-158 (QVLDSKTPKPEDIDEEEDDVPDLVENFDEASKNEAN) are disordered. The span at 134–150 (DIDEEEDDVPDLVENFD) shows a compositional bias: acidic residues.

It belongs to the NAC-beta family.

The protein is Transcription factor BTF3 homolog 4 (BTF3L4) of Bos taurus (Bovine).